The chain runs to 257 residues: Protein YIPF5 (257 aa).

At 1–124 (MSGFDNLNSG…RASDGSIMNE (124 aa)) the chain is on the cytoplasmic side. The tract at residues 75 to 106 (PPTPQTFYGDSFEEEPPLLEELGINFDHIWQK) is interaction with Sec23. A helical membrane pass occupies residues 125–145 (TDLAGPVVFCLAFGATLLLAG). Lysine 146 is a topological domain (lumenal). A helical transmembrane segment spans residues 147–167 (IQFGYVYGISAIGCLGMFCLL). Residues 168-173 (NLMSMT) are Cytoplasmic-facing. A helical membrane pass occupies residues 174–194 (GVSFGCVASVLGYCLLPMILL). Over 195–196 (SS) the chain is Lumenal. Residues 197-217 (FAVVFSLQGMVGILLTATIIG) traverse the membrane as a helical segment. The Cytoplasmic portion of the chain corresponds to 218-236 (WCSFSASKIFISALAMDGQ). The chain crosses the membrane as a helical span at residues 237 to 257 (QLLVAYPCALLYGVFALISVF).

Belongs to the YIP1 family. Interacts with the COPII coat components Sec23 (SEC23A and/or SEC23B) and Sec24 (SEC24A and/or SEC24B). Interacts with YIF1A. May interact with RAB1A. Interacts with YIPF3 and YIPF4.

The protein resides in the endoplasmic reticulum membrane. It is found in the golgi apparatus. Its subcellular location is the cis-Golgi network membrane. The protein localises to the cytoplasmic vesicle. It localises to the COPII-coated vesicle. Its function is as follows. Plays a role in transport between endoplasmic reticulum and Golgi. In pancreatic beta cells, required to transport proinsulin from endoplasmic reticulum into the Golgi. In Rattus norvegicus (Rat), this protein is Protein YIPF5.